Here is a 327-residue protein sequence, read N- to C-terminus: Cell division protein ZipA (327 aa).

Residues 1–5 (MQDLR) lie on the Periplasmic side of the membrane. Residues 6-26 (LILIVVGAIAIIALLLHGLWT) form a helical membrane-spanning segment. At 27-327 (SRKERSSLFR…REVLDANTIA (301 aa)) the chain is on the cytoplasmic side. The segment covering 60–71 (GEVRVRTSHPQE) has biased composition (basic and acidic residues). The segment at 60–182 (GEVRVRTSHP…EPVAPAPEAK (123 aa)) is disordered. 2 stretches are compositionally biased toward polar residues: residues 94 to 103 (KSAQVKTASR) and 163 to 173 (APQQHVESQQE).

This sequence belongs to the ZipA family. In terms of assembly, interacts with FtsZ via their C-terminal domains.

It localises to the cell inner membrane. In terms of biological role, essential cell division protein that stabilizes the FtsZ protofilaments by cross-linking them and that serves as a cytoplasmic membrane anchor for the Z ring. Also required for the recruitment to the septal ring of downstream cell division proteins. The sequence is that of Cell division protein ZipA from Yersinia pseudotuberculosis serotype O:1b (strain IP 31758).